The chain runs to 780 residues: ATP-dependent 6-phosphofructokinase, liver type (780 aa).

Alanine 2 bears the N-acetylalanine mark. The interval 2 to 390 is N-terminal catalytic PFK domain 1; that stretch reads ASVDLEKLRT…NWNIYKLLSH (389 aa). Residues glycine 25, 88 to 89, and 118 to 121 each bind ATP; these read RC and GDGS. Position 119 (aspartate 119) interacts with Mg(2+). Residues 164 to 166, arginine 201, 208 to 210, glutamate 264, arginine 292, and 298 to 301 contribute to the substrate site; these read SID, MGR, and HVQR. Aspartate 166 serves as the catalytic Proton acceptor. A Phosphoserine modification is found at serine 377. The tract at residues 391 to 400 is interdomain linker; the sequence is QKISKEKTNF. The segment at 401–780 is C-terminal regulatory PFK domain 2; sequence SLAILNVGAP…RRTLSIETGF (380 aa). Beta-D-fructose 2,6-bisphosphate-binding positions include arginine 470, 527–531, arginine 565, 572–574, and glutamate 628; these read TISNN and MGG. Residue serine 529 is glycosylated (O-linked (GlcNAc) serine). Residue tyrosine 640 is modified to Phosphotyrosine. Beta-D-fructose 2,6-bisphosphate is bound by residues arginine 654, 660–663, and arginine 734; that span reads HLQQ. At serine 775 the chain carries Phosphoserine.

Belongs to the phosphofructokinase type A (PFKA) family. ATP-dependent PFK group I subfamily. Eukaryotic two domain clade 'E' sub-subfamily. As to quaternary structure, homo- and heterotetramers. Phosphofructokinase (PFK) enzyme functions as a tetramer composed of different combinations of 3 types of subunits, called PFKM (M), PFKL (L) and PFKP (P). The composition of the PFK tetramer differs according to the tissue type it is present in. The kinetic and regulatory properties of the tetrameric enzyme are dependent on the subunit composition, hence can vary across tissues. The cofactor is Mg(2+). GlcNAcylation at Ser-529 by OGT decreases enzyme activity, leading to redirect glucose flux through the oxidative pentose phosphate pathway. Glycosylation is stimulated by both hypoxia and glucose deprivation.

It localises to the cytoplasm. The enzyme catalyses beta-D-fructose 6-phosphate + ATP = beta-D-fructose 1,6-bisphosphate + ADP + H(+). The protein operates within carbohydrate degradation; glycolysis; D-glyceraldehyde 3-phosphate and glycerone phosphate from D-glucose: step 3/4. With respect to regulation, allosterically activated by ADP, AMP, or fructose 2,6-bisphosphate, and allosterically inhibited by ATP or citrate. GlcNAcylation by OGT overcomes allosteric regulation. Its function is as follows. Catalyzes the phosphorylation of D-fructose 6-phosphate to fructose 1,6-bisphosphate by ATP, the first committing step of glycolysis. Negatively regulates the phagocyte oxidative burst in response to bacterial infection by controlling cellular NADPH biosynthesis and NADPH oxidase-derived reactive oxygen species. Upon macrophage activation, drives the metabolic switch toward glycolysis, thus preventing glucose turnover that produces NADPH via pentose phosphate pathway. This is ATP-dependent 6-phosphofructokinase, liver type (PFKL) from Bos taurus (Bovine).